Here is a 555-residue protein sequence, read N- to C-terminus: Formate--tetrahydrofolate ligase (555 aa).

65 to 72 (TPAGEGKS) serves as a coordination point for ATP.

This sequence belongs to the formate--tetrahydrofolate ligase family.

It catalyses the reaction (6S)-5,6,7,8-tetrahydrofolate + formate + ATP = (6R)-10-formyltetrahydrofolate + ADP + phosphate. It participates in one-carbon metabolism; tetrahydrofolate interconversion. The protein is Formate--tetrahydrofolate ligase of Lactococcus lactis subsp. lactis (strain IL1403) (Streptococcus lactis).